A 148-amino-acid chain; its full sequence is Small ribosomal subunit protein uS15 (148 aa).

The protein belongs to the universal ribosomal protein uS15 family.

This is Small ribosomal subunit protein uS15 (RPS13) from Encephalitozoon cuniculi (strain GB-M1) (Microsporidian parasite).